Here is a 522-residue protein sequence, read N- to C-terminus: Protein nucleotidyltransferase YdiU (522 aa).

8 residues coordinate ATP: glycine 109, glycine 111, arginine 112, lysine 132, aspartate 144, glycine 145, arginine 195, and arginine 202. Aspartate 271 acts as the Proton acceptor in catalysis. Mg(2+)-binding residues include asparagine 272 and aspartate 281. Residue aspartate 281 participates in ATP binding.

Belongs to the SELO family. Requires Mg(2+) as cofactor. It depends on Mn(2+) as a cofactor.

It carries out the reaction L-seryl-[protein] + ATP = 3-O-(5'-adenylyl)-L-seryl-[protein] + diphosphate. It catalyses the reaction L-threonyl-[protein] + ATP = 3-O-(5'-adenylyl)-L-threonyl-[protein] + diphosphate. The enzyme catalyses L-tyrosyl-[protein] + ATP = O-(5'-adenylyl)-L-tyrosyl-[protein] + diphosphate. The catalysed reaction is L-histidyl-[protein] + UTP = N(tele)-(5'-uridylyl)-L-histidyl-[protein] + diphosphate. It carries out the reaction L-seryl-[protein] + UTP = O-(5'-uridylyl)-L-seryl-[protein] + diphosphate. It catalyses the reaction L-tyrosyl-[protein] + UTP = O-(5'-uridylyl)-L-tyrosyl-[protein] + diphosphate. Nucleotidyltransferase involved in the post-translational modification of proteins. It can catalyze the addition of adenosine monophosphate (AMP) or uridine monophosphate (UMP) to a protein, resulting in modifications known as AMPylation and UMPylation. In Burkholderia lata (strain ATCC 17760 / DSM 23089 / LMG 22485 / NCIMB 9086 / R18194 / 383), this protein is Protein nucleotidyltransferase YdiU.